The following is a 259-amino-acid chain: Protein POLYCHOME (259 aa).

Positions K236–R259 are disordered.

As to quaternary structure, interacts with APC/C activators such as APC5, FZR2, FZR3, CDC20.1 and CDC20.5. In terms of tissue distribution, expressed mainly in actively dividing cells (e.g. central cylinder of the root tip, young leaves and vascular tissues).

The protein localises to the nucleus. Its function is as follows. Negative regulator of the anaphase-promoting complex/cyclosome (APC/C) ubiquitin ligase required for proper mitotic progression and cell fate determination; inhibits premature cell differentiation. Prevents DNA endoreplication by promoting the maintenance of the mitotic state by preferentially inhibiting APC/C(FZR) and triggering cyclins accumulation (e.g. CYCB1-1, CYCB1-2 and CYCA2-3) in a temporal manner. Required for megagametophyte and endosperm development. Counteracts the activity of CCS52A1 thus inhibiting the turnover of CYCA2-3. Confers immunity to bacterial pathogens (e.g. Pseudomonas syringae pv. tomato DC3000), which is associated with increased expression of disease resistance (R) genes. The chain is Protein POLYCHOME (PYM) from Arabidopsis thaliana (Mouse-ear cress).